Consider the following 203-residue polypeptide: uncharacterized protein (203 aa).

The first 31 residues, 1-31 (MKKTFVKKAMLTTAAMTSAALLTFGPDAASA), serve as a signal peptide directing secretion.

This is an uncharacterized protein from Bacillus subtilis (strain 168).